The following is a 175-amino-acid chain: Epididymal-specific lipocalin-8 (175 aa).

Positions methionine 1–serine 22 are cleaved as a signal peptide. Asparagine 66 and asparagine 74 each carry an N-linked (GlcNAc...) asparagine glycan. A disulfide bridge links cysteine 79 with cysteine 166.

Belongs to the calycin superfamily. Lipocalin family. Predominantly expressed in epididymis.

The protein resides in the secreted. Functionally, may play a role in male fertility. May act as a retinoid carrier protein within the epididymis. The chain is Epididymal-specific lipocalin-8 (Lcn8) from Mus musculus (Mouse).